Here is a 379-residue protein sequence, read N- to C-terminus: S-(hydroxymethyl)glutathione dehydrogenase (379 aa).

Cys47 serves as a coordination point for Zn(2+). NAD(+) is bound at residue His48. Residues His69, Glu70, Cys99, Cys102, Cys105, Cys113, and Cys176 each coordinate Zn(2+). NAD(+)-binding positions include 201–206 (GAGCIG), Asp225, and 296–298 (IGV).

This sequence belongs to the zinc-containing alcohol dehydrogenase family. Class-III subfamily. The cofactor is Zn(2+).

It catalyses the reaction a primary alcohol + NAD(+) = an aldehyde + NADH + H(+). The enzyme catalyses a secondary alcohol + NAD(+) = a ketone + NADH + H(+). It carries out the reaction S-(hydroxymethyl)glutathione + NADP(+) = S-formylglutathione + NADPH + H(+). The catalysed reaction is S-(hydroxymethyl)glutathione + NAD(+) = S-formylglutathione + NADH + H(+). It catalyses the reaction S-nitrosoglutathione + NADH + H(+) = S-(hydroxysulfenamide)glutathione + NAD(+). Its function is as follows. Oxidizes long-chain alcohols and, in the presence of glutathione, is able to oxidize formaldehyde. Also acts as a S-nitroso-glutathione reductase by catalyzing the NADH-dependent reduction of S-nitrosoglutathione, thereby regulating protein S-nitrosylation. The sequence is that of S-(hydroxymethyl)glutathione dehydrogenase (FLD1) from Komagataella pastoris (Yeast).